The chain runs to 358 residues: Reverse gyrase subunit A (358 aa).

Positions 1 to 351 (MNATLRIRNR…KLYLELERVV (351 aa)) constitute a Topo IA-type catalytic domain. The active-site O-(5'-phospho-DNA)-tyrosine intermediate is the tyrosine 78.

The protein belongs to the type IA topoisomerase family. As to quaternary structure, heterodimer of an RgyrA and RgyrB subunit. The topoisomerase domain is shared between the two subunits. Mg(2+) serves as cofactor.

The protein localises to the cytoplasm. Modifies the topological state of DNA by introducing positive supercoils in an ATP-dependent process; dATP also allows positive supercoiling. Increases the linking number in steps of +1. Only this subunit binds DNA, in isolation it does not hydrolyze ATP. Hydrolyzes ATP only in the presence of DNA. Transiently cleaves a single DNA strand and remains covalently bound to the 5' DNA end probably through a tyrosine residue. It changes linking number in steps of one, and nicks DNA preferentially at 5'-CNNN | 3'-sites with a strong preference for 4 pyrimidine residues. There are about 1000 heterodimers per cell. May be involved in rewinding the DNA strands in the regions of the chromosome that have opened up to allow transcription or replication. In terms of biological role, reverse gyrase activity is reconstituted after incubation at 80 degrees Celsius for 5 minutes, positive supercoiling requires ATP and Mg(2+). In the presence of ATP it binds and nicks substrate but does not make closed product. The protein is Reverse gyrase subunit A of Methanopyrus kandleri (strain AV19 / DSM 6324 / JCM 9639 / NBRC 100938).